We begin with the raw amino-acid sequence, 312 residues long: Olfactory receptor 2T10 (312 aa).

Over 1-25 (MRLANQTLGGDFFLLGIFSQISHPG) the chain is Extracellular. Asparagine 5 carries N-linked (GlcNAc...) asparagine glycosylation. A helical transmembrane segment spans residues 26 to 49 (RLCLLIFSIFLMAVSWNITLILLI). The Cytoplasmic portion of the chain corresponds to 50 to 57 (HIDSSLHT). The chain crosses the membrane as a helical span at residues 58–79 (PMYFFINQLSLIDLTYISVTVP). Residues 80-100 (KMLVNQLAKDKTISVLGCGTQ) are Extracellular-facing. The cysteines at positions 97 and 189 are disulfide-linked. Residues 101 to 120 (MYFYLQLGGAECCLLAAMAY) form a helical membrane-spanning segment. Over 121-139 (DRYVAICHPLRYSVLMSHR) the chain is Cytoplasmic. The helical transmembrane segment at 140–158 (VCLLLASGCWFVGSVDGFM) threads the bilayer. Over 159 to 195 (LTPIAMSFPFCRSHEIQHFFCEVPAVLKLSCSDTSLY) the chain is Extracellular. The chain crosses the membrane as a helical span at residues 196–219 (KIFMYLCCVIMLLIPVTVISVSYY). The Cytoplasmic portion of the chain corresponds to 220 to 236 (YIILTIHKMNSVEGRKK). A helical transmembrane segment spans residues 237–259 (AFTTCSSHITVVSLFYGAAIYNY). The Extracellular portion of the chain corresponds to 260–272 (MLPSSYQTPEKDM). A helical membrane pass occupies residues 273-292 (MSSFFYTILTPVLNPIIYSF). Over 293–312 (RNKDVTRALKKMLSVQKPPY) the chain is Cytoplasmic.

The protein belongs to the G-protein coupled receptor 1 family.

The protein resides in the cell membrane. Functionally, odorant receptor. The sequence is that of Olfactory receptor 2T10 (OR2T10) from Homo sapiens (Human).